The following is a 397-amino-acid chain: E3 ubiquitin-protein ligase RNF149 (397 aa).

An N-terminal signal peptide occupies residues 1 to 20 (MLRWLCLYSALCALTHGSSA). The span at 39–49 (TNSSVTGSTES) shows a compositional bias: polar residues. The interval 39–60 (TNSSVTGSTESGRYGDSSPKES) is disordered. Asparagine 40 and asparagine 140 each carry an N-linked (GlcNAc...) asparagine glycan. Positions 83 to 170 (YIVPGTSAAA…PKGMEIMEPL (88 aa)) constitute a PA domain. Residues 196–216 (VVFVAIAFITMMIISLAWLIF) traverse the membrane as a helical segment. An N-linked (GlcNAc...) asparagine glycan is attached at asparagine 231. An RING-type; atypical zinc finger spans residues 264 to 305 (CAVCIENYKTKDLVRILPCKHIFHRLCIDPWLIEHRTCPMCK). The interval 341-397 (SITQEESRSEGNNLPSSSTGSSLQQSNSVKDDAGETTALLDDPGNDNAAATHTQDSH) is disordered. Residues 351–368 (GNNLPSSSTGSSLQQSNS) are compositionally biased toward low complexity. A compositionally biased stretch (polar residues) spans 388–397 (AAATHTQDSH).

It localises to the membrane. The enzyme catalyses S-ubiquitinyl-[E2 ubiquitin-conjugating enzyme]-L-cysteine + [acceptor protein]-L-lysine = [E2 ubiquitin-conjugating enzyme]-L-cysteine + N(6)-ubiquitinyl-[acceptor protein]-L-lysine.. The protein operates within protein modification; protein ubiquitination. Functionally, E3 ubiquitin-protein ligase. Ubiquitinates BRAF, inducing its proteasomal degradation. This chain is E3 ubiquitin-protein ligase RNF149 (rnf149), found in Xenopus laevis (African clawed frog).